A 591-amino-acid polypeptide reads, in one-letter code: Guanylate-binding protein 2 (591 aa).

A GTPase domain (Globular) region spans residues 1–309 (MAPEINLPGP…NAISSGDLPC (309 aa)). Residues 35 to 276 (TQPVVVVAIV…FCSYILSHSN (242 aa)) form the GB1/RHD3-type G domain. GTP-binding positions include 45-52 (GLYRTGKS), 181-182 (RD), and Leu245. Cys588 carries the post-translational modification Cysteine methyl ester. Cys588 carries the S-geranylgeranyl cysteine lipid modification. Positions 589–591 (NIL) are cleaved as a propeptide — removed in mature form.

It belongs to the TRAFAC class dynamin-like GTPase superfamily. GB1/RHD3 GTPase family. GB1 subfamily. As to quaternary structure, homodimer; homodimerization occurs upon GTP-binding and is required for the association with membranous structures. Heterodimer with other family members, including GBP1, GBP3, GBP4 and GBP5. Post-translationally, (Microbial infection) Ubiquitinated by S.flexneri IpaH9.8, leading to its degradation by the proteasome, thereby preventing its ability to promote host defense against bacterial infection. In terms of processing, isoprenylation is required for proper subcellular location.

The protein localises to the cytoplasmic vesicle membrane. It is found in the golgi apparatus membrane. The protein resides in the cytoplasm. Its subcellular location is the perinuclear region. It catalyses the reaction GTP + H2O = GDP + phosphate + H(+). Its function is as follows. Interferon (IFN)-inducible GTPase that plays important roles in innate immunity against a diverse range of bacterial, viral and protozoan pathogens. Hydrolyzes GTP to GMP in 2 consecutive cleavage reactions, but the major reaction product is GDP. Following infection, recruited to the pathogen-containing vacuoles or vacuole-escaped bacteria and acts as a positive regulator of inflammasome assembly by promoting the release of inflammasome ligands from bacteria. Acts by promoting lysis of pathogen-containing vacuoles, releasing pathogens into the cytosol. Following pathogen release in the cytosol, promotes recruitment of proteins that mediate bacterial cytolysis: this liberates ligands that are detected by inflammasomes, such as lipopolysaccharide (LPS) that activates the non-canonical CASP4/CASP11 inflammasome or double-stranded DNA (dsDNA) that activates the AIM2 inflammasome. Confers protection to the protozoan pathogen Toxoplasma gondii. Independently of its GTPase activity, acts as an inhibitor of various viruses infectivity, such as HIV-1, Zika and influenza A viruses, by inhibiting FURIN-mediated maturation of viral envelope proteins. This is Guanylate-binding protein 2 from Homo sapiens (Human).